The sequence spans 523 residues: Peptide chain release factor 3 (523 aa).

The 268-residue stretch at 10–277 (EKRRTFAIIS…SFVDLAPAPE (268 aa)) folds into the tr-type G domain. Residues 19–26 (SHPDAGKT), 87–91 (DTPGH), and 141–144 (NKLD) contribute to the GTP site.

Belongs to the TRAFAC class translation factor GTPase superfamily. Classic translation factor GTPase family. PrfC subfamily.

Its subcellular location is the cytoplasm. Its function is as follows. Increases the formation of ribosomal termination complexes and stimulates activities of RF-1 and RF-2. It binds guanine nucleotides and has strong preference for UGA stop codons. It may interact directly with the ribosome. The stimulation of RF-1 and RF-2 is significantly reduced by GTP and GDP, but not by GMP. This chain is Peptide chain release factor 3, found in Lactobacillus acidophilus (strain ATCC 700396 / NCK56 / N2 / NCFM).